The chain runs to 125 residues: uncharacterized protein (125 aa).

The protein belongs to the HesB/IscA family.

This is an uncharacterized protein from Azospirillum brasilense.